The sequence spans 236 residues: MSERKSDPDRDDSERAFFGRRKGHKLRQHQAELIDHLLPHLALDIAGEAPGNACEIFDPAASDVRLEIGFGGGEHLAAEAQNFATTGFIGCEPYVNGMAKILAQIEAGNIANIRLFAGDAAELLAWLPKASLSRIDLIHPDPWPKRRHWKRRFVQDRTIAAMARVLKVGGEFRFVCDIDDYCAWTLSHLARSADFKWLAERADDFRQPWDGYTMTRYGRKAAREGRKAAYLRFRRS.

A compositionally biased stretch (basic and acidic residues) spans Met1–Phe17. The segment at Met1–Gly23 is disordered. Residues Glu67, Glu92, Asp119, and Asp141 each contribute to the S-adenosyl-L-methionine site. The active site involves Asp141. Positions 145 and 177 each coordinate substrate.

This sequence belongs to the class I-like SAM-binding methyltransferase superfamily. TrmB family.

The enzyme catalyses guanosine(46) in tRNA + S-adenosyl-L-methionine = N(7)-methylguanosine(46) in tRNA + S-adenosyl-L-homocysteine. It functions in the pathway tRNA modification; N(7)-methylguanine-tRNA biosynthesis. Its function is as follows. Catalyzes the formation of N(7)-methylguanine at position 46 (m7G46) in tRNA. This chain is tRNA (guanine-N(7)-)-methyltransferase, found in Bradyrhizobium diazoefficiens (strain JCM 10833 / BCRC 13528 / IAM 13628 / NBRC 14792 / USDA 110).